The following is an 82-amino-acid chain: Costars family protein v1g158749 (82 aa).

It belongs to the costars family.

The chain is Costars family protein v1g158749 from Nematostella vectensis (Starlet sea anemone).